Reading from the N-terminus, the 156-residue chain is 6,7-dimethyl-8-ribityllumazine synthase (156 aa).

5-amino-6-(D-ribitylamino)uracil contacts are provided by residues phenylalanine 23, 57 to 59 (AYE), and 81 to 83 (AVI). Residue 86 to 87 (ST) participates in (2S)-2-hydroxy-3-oxobutyl phosphate binding. The active-site Proton donor is the histidine 89. Phenylalanine 114 is a binding site for 5-amino-6-(D-ribitylamino)uracil. Residue arginine 128 participates in (2S)-2-hydroxy-3-oxobutyl phosphate binding.

This sequence belongs to the DMRL synthase family.

The enzyme catalyses (2S)-2-hydroxy-3-oxobutyl phosphate + 5-amino-6-(D-ribitylamino)uracil = 6,7-dimethyl-8-(1-D-ribityl)lumazine + phosphate + 2 H2O + H(+). It participates in cofactor biosynthesis; riboflavin biosynthesis; riboflavin from 2-hydroxy-3-oxobutyl phosphate and 5-amino-6-(D-ribitylamino)uracil: step 1/2. Catalyzes the formation of 6,7-dimethyl-8-ribityllumazine by condensation of 5-amino-6-(D-ribitylamino)uracil with 3,4-dihydroxy-2-butanone 4-phosphate. This is the penultimate step in the biosynthesis of riboflavin. This is 6,7-dimethyl-8-ribityllumazine synthase from Helicobacter hepaticus (strain ATCC 51449 / 3B1).